We begin with the raw amino-acid sequence, 185 residues long: Guanylate kinase (185 aa).

The Guanylate kinase-like domain occupies 4–181; the sequence is GALYVVSGPS…ACNDLISIIE (178 aa). ATP is bound at residue 11–18; it reads GPSGAGKS.

The protein belongs to the guanylate kinase family.

Its subcellular location is the cytoplasm. The catalysed reaction is GMP + ATP = GDP + ADP. In terms of biological role, essential for recycling GMP and indirectly, cGMP. In Fusobacterium nucleatum subsp. nucleatum (strain ATCC 25586 / DSM 15643 / BCRC 10681 / CIP 101130 / JCM 8532 / KCTC 2640 / LMG 13131 / VPI 4355), this protein is Guanylate kinase.